Consider the following 251-residue polypeptide: Flap endonuclease Xni (251 aa).

Mg(2+) is bound at residue D104. The region spanning 160-249 (VLPRQLPDYW…IDGNLQQLRL (90 aa)) is the 5'-3' exonuclease domain. K(+) is bound by residues L171, A172, P180, V182, and I185. An interaction with DNA region spans residues 184–189 (GIGPKS).

This sequence belongs to the Xni family. Mg(2+) serves as cofactor. Requires K(+) as cofactor.

In terms of biological role, has flap endonuclease activity. During DNA replication, flap endonucleases cleave the 5'-overhanging flap structure that is generated by displacement synthesis when DNA polymerase encounters the 5'-end of a downstream Okazaki fragment. The chain is Flap endonuclease Xni from Salmonella dublin (strain CT_02021853).